Reading from the N-terminus, the 82-residue chain is Small ribosomal subunit protein uS12 (82 aa).

3-methylthioaspartic acid is present on Asp59.

This sequence belongs to the universal ribosomal protein uS12 family. In terms of assembly, part of the 30S ribosomal subunit. Contacts proteins S8 and S17. May interact with IF1 in the 30S initiation complex.

With S4 and S5 plays an important role in translational accuracy. Its function is as follows. Interacts with and stabilizes bases of the 16S rRNA that are involved in tRNA selection in the A site and with the mRNA backbone. Located at the interface of the 30S and 50S subunits, it traverses the body of the 30S subunit contacting proteins on the other side and probably holding the rRNA structure together. The combined cluster of proteins S8, S12 and S17 appears to hold together the shoulder and platform of the 30S subunit. This chain is Small ribosomal subunit protein uS12 (rpsL), found in Actinobacillus pleuropneumoniae (Haemophilus pleuropneumoniae).